The sequence spans 182 residues: Isopentenyl-diphosphate Delta-isomerase (182 aa).

Mn(2+)-binding residues include His25 and His32. The 135-residue stretch at Leu30–Met164 folds into the Nudix hydrolase domain. Cys67 is an active-site residue. Mn(2+) is bound at residue His69. Glu87 is a binding site for Mg(2+). Residues Glu114 and Glu116 each contribute to the Mn(2+) site. The active site involves Glu116.

This sequence belongs to the IPP isomerase type 1 family. In terms of assembly, homodimer. Mg(2+) is required as a cofactor. The cofactor is Mn(2+).

Its subcellular location is the cytoplasm. It catalyses the reaction isopentenyl diphosphate = dimethylallyl diphosphate. Its pathway is isoprenoid biosynthesis; dimethylallyl diphosphate biosynthesis; dimethylallyl diphosphate from isopentenyl diphosphate: step 1/1. In terms of biological role, catalyzes the 1,3-allylic rearrangement of the homoallylic substrate isopentenyl (IPP) to its highly electrophilic allylic isomer, dimethylallyl diphosphate (DMAPP). This is Isopentenyl-diphosphate Delta-isomerase from Escherichia coli O127:H6 (strain E2348/69 / EPEC).